Consider the following 190-residue polypeptide: Threonylcarbamoyl-AMP synthase (190 aa).

Residues 7–190 form the YrdC-like domain; the sequence is TGSIAAAVDL…ALTGELFRQG (184 aa).

It belongs to the SUA5 family. TsaC subfamily.

Its subcellular location is the cytoplasm. The enzyme catalyses L-threonine + hydrogencarbonate + ATP = L-threonylcarbamoyladenylate + diphosphate + H2O. In terms of biological role, required for the formation of a threonylcarbamoyl group on adenosine at position 37 (t(6)A37) in tRNAs that read codons beginning with adenine. Catalyzes the conversion of L-threonine, HCO(3)(-)/CO(2) and ATP to give threonylcarbamoyl-AMP (TC-AMP) as the acyladenylate intermediate, with the release of diphosphate. In Salmonella choleraesuis (strain SC-B67), this protein is Threonylcarbamoyl-AMP synthase.